Here is a 194-residue protein sequence, read N- to C-terminus: Dof zinc finger protein DOF1.7 (194 aa).

The Dof-type zinc finger occupies 33 to 87; it reads LKCPRCDSPNTKFCYYNNYNLSQPRHFCKNCRRYWTKGGALRNIPVGGGTRKSNK. Zn(2+) contacts are provided by Cys35, Cys38, Cys60, and Cys63. A disordered region spans residues 74 to 125; that stretch reads RNIPVGGGTRKSNKRSGSSPSSNLKNQTVAEKPDHHGSGSEEKEERVSGQEM. Residues 88-99 are compositionally biased toward low complexity; the sequence is RSGSSPSSNLKN. Over residues 104 to 121 the composition is skewed to basic and acidic residues; sequence EKPDHHGSGSEEKEERVS.

It is found in the nucleus. Its function is as follows. Transcription factor that binds specifically to a 5'-AA[AG]G-3' consensus core sequence. The polypeptide is Dof zinc finger protein DOF1.7 (DOF1.7) (Arabidopsis thaliana (Mouse-ear cress)).